The primary structure comprises 343 residues: MLKLVCAVVLIATVNAKGSSPGFGIGQLPGITVVSGGVSGGSLSGGVSGGSLSGGIYGGYPRLYGGFGPGGVYGSINSFGGVNTNAYGLYGTSPAVRGAAQGAAATSVLGILSGVPSRISGYSVGTGGGRAFVSGSATPIGGLPYGGYGYGGYGYGGYGGYGYGGYGYPDIAYYGGSTYGNIASGVISSPTSGVSLPYGGILGLYGGYGGYGSGYGGYGMGSAYSIGNYLSGHGGYYGGSYPSYGSTLTGVSQSLSFGRAIMSGQAFGAGVPAFGSVNFGNFGVGTGGIGILGGGGVIGSGGVIGGGGVIGGGGVVGGGAVIGGGGVIGGGVPTGGIIRKKKY.

The first 16 residues, Met1 to Ala16, serve as a signal peptide directing secretion.

Prismatic layer of shell (at protein level).

Its subcellular location is the secreted. The polypeptide is Shematrin-like protein 3 (Pinctada maxima (Silver-lipped pearl oyster)).